The sequence spans 438 residues: Adenosylhomocysteinase (438 aa).

Substrate is bound by residues Thr64, Asp139, and Glu164. 165 to 167 (TTT) lines the NAD(+) pocket. Residues Lys194 and Asp198 each contribute to the substrate site. NAD(+) contacts are provided by residues Asn199, 228–233 (GYGDVG), Glu251, Asn286, 307–309 (IGH), and Asn352.

This sequence belongs to the adenosylhomocysteinase family. NAD(+) serves as cofactor.

Its subcellular location is the cytoplasm. The catalysed reaction is S-adenosyl-L-homocysteine + H2O = L-homocysteine + adenosine. The protein operates within amino-acid biosynthesis; L-homocysteine biosynthesis; L-homocysteine from S-adenosyl-L-homocysteine: step 1/1. Its function is as follows. May play a key role in the regulation of the intracellular concentration of adenosylhomocysteine. In Coxiella burnetii (strain Dugway 5J108-111), this protein is Adenosylhomocysteinase.